A 402-amino-acid polypeptide reads, in one-letter code: D-galactonate dehydratase family member EGBG_02030 (402 aa).

Residue Asp-207 coordinates Mg(2+). His-209 is a binding site for D-arabinonate. Residues Glu-233 and Glu-259 each contribute to the Mg(2+) site. Residues Glu-259, Arg-280, His-309, and Glu-336 each coordinate D-arabinonate.

Belongs to the mandelate racemase/muconate lactonizing enzyme family. GalD subfamily.

In terms of biological role, has no detectable activity with D-mannonate and with a panel of 70 other acid sugars (in vitro), in spite of the conservation of the residues that are expected to be important for catalytic activity and cofactor binding. May have evolved a divergent function. This chain is D-galactonate dehydratase family member EGBG_02030, found in Enterococcus gallinarum (strain EG2).